The following is a 469-amino-acid chain: Glutamine synthetase (469 aa).

A GS beta-grasp domain is found at 15–96 (EDVKFVDVRF…INFFIHDPIT (82 aa)). Positions 104 to 469 (PRNVAKKAEA…PHEFEMYFDV (366 aa)) constitute a GS catalytic domain. Mg(2+) contacts are provided by Glu129 and Glu131. Residue Glu205 participates in ATP binding. Residues Glu210 and Glu218 each contribute to the Mg(2+) site. 221–223 (YKF) contacts ATP. Residues 262-263 (NG) and Gly263 contribute to the L-glutamate site. His267 contributes to the Mg(2+) binding site. ATP-binding positions include 269-271 (HQS) and Ser271. Residues Arg320, Glu326, and Arg338 each coordinate L-glutamate. Residues Arg338, Arg343, and Lys352 each contribute to the ATP site. Mg(2+) is bound at residue Glu357. Arg359 is a binding site for L-glutamate. Tyr397 carries the post-translational modification O-AMP-tyrosine.

Belongs to the glutamine synthetase family. As to quaternary structure, oligomer of 12 subunits arranged in the form of two hexagons. Mg(2+) is required as a cofactor.

It localises to the cytoplasm. It catalyses the reaction L-glutamate + NH4(+) + ATP = L-glutamine + ADP + phosphate + H(+). Its activity is regulated as follows. The activity of this enzyme could be controlled by adenylation under conditions of abundant glutamine. Functionally, catalyzes the ATP-dependent biosynthesis of glutamine from glutamate and ammonia. Complements L-glutamine auxotrophy of an E.coli glnA mutant. This Streptomyces coelicolor (strain ATCC BAA-471 / A3(2) / M145) protein is Glutamine synthetase.